The primary structure comprises 339 residues: RNA 3'-terminal phosphate cyclase (339 aa).

ATP contacts are provided by residues aspartate 109 and 286–290 (HLADQ). The active-site Tele-AMP-histidine intermediate is the histidine 310.

This sequence belongs to the RNA 3'-terminal cyclase family. Type 1 subfamily.

Its subcellular location is the cytoplasm. It catalyses the reaction a 3'-end 3'-phospho-ribonucleotide-RNA + ATP = a 3'-end 2',3'-cyclophospho-ribonucleotide-RNA + AMP + diphosphate. Its function is as follows. Catalyzes the conversion of 3'-phosphate to a 2',3'-cyclic phosphodiester at the end of RNA. The mechanism of action of the enzyme occurs in 3 steps: (A) adenylation of the enzyme by ATP; (B) transfer of adenylate to an RNA-N3'P to produce RNA-N3'PP5'A; (C) and attack of the adjacent 2'-hydroxyl on the 3'-phosphorus in the diester linkage to produce the cyclic end product. The biological role of this enzyme is unknown but it is likely to function in some aspects of cellular RNA processing. The polypeptide is RNA 3'-terminal phosphate cyclase (Halobacterium salinarum (strain ATCC 29341 / DSM 671 / R1)).